Reading from the N-terminus, the 226-residue chain is Lipoprotein-releasing system ATP-binding protein LolD (226 aa).

One can recognise an ABC transporter domain in the interval 5–225 (FALSNISKFF…EINSCMLSSV (221 aa)). 40–47 (GRSGSGKS) is a binding site for ATP.

This sequence belongs to the ABC transporter superfamily. Lipoprotein translocase (TC 3.A.1.125) family. As to quaternary structure, the complex is composed of two ATP-binding proteins (LolD) and two transmembrane proteins (LolC and LolE).

It is found in the cell inner membrane. Functionally, part of the ABC transporter complex LolCDE involved in the translocation of mature outer membrane-directed lipoproteins, from the inner membrane to the periplasmic chaperone, LolA. Responsible for the formation of the LolA-lipoprotein complex in an ATP-dependent manner. This chain is Lipoprotein-releasing system ATP-binding protein LolD, found in Ehrlichia canis (strain Jake).